Reading from the N-terminus, the 102-residue chain is Virulence plasmid protein pGP4-D (102 aa).

The chain is Virulence plasmid protein pGP4-D from Chlamydia trachomatis serovar L2 (strain ATCC VR-902B / DSM 19102 / 434/Bu).